A 376-amino-acid chain; its full sequence is uncharacterized protein (376 aa).

2 helical membrane-spanning segments follow: residues 153–173 and 188–208; these read QGTL…VLFA and HRPF…LAVY.

It is found in the membrane. This is an uncharacterized protein from Saccharomyces cerevisiae (strain ATCC 204508 / S288c) (Baker's yeast).